The primary structure comprises 306 residues: ADP,ATP carrier protein ER-ANT1 (306 aa).

Solcar repeat units lie at residues 8–101, 113–205, and 213–299; these read ERFS…FKNL, KWFA…IKPI, and GNFL…LHQI. The next 5 helical transmembrane spans lie at 10–37, 78–102, 111–131, 181–202, and 216–236; these read FSAD…VKLL, QANV…KNLL, YLKW…TTSL, FGVS…YDTI, and LASF…AYPF. 2 residues coordinate ADP: R83 and K95. R240 contributes to the ADP binding site. The segment at 240–245 is important for transport activity; that stretch reads RRRMML. Residues 240–245 carry the Nucleotide carrier signature motif motif; that stretch reads RRRMML. Residues 276–296 traverse the membrane as a helical segment; the sequence is VTANMLLGVAGAGVLAGYDQL.

The protein belongs to the mitochondrial carrier (TC 2.A.29) family.

The protein resides in the endoplasmic reticulum membrane. The enzyme catalyses ADP(in) + ATP(out) = ADP(out) + ATP(in). Functionally, ADP:ATP antiporter that catalyzes the exchange of ADP and ATP across the endoplasmic reticulum membrane. The polypeptide is ADP,ATP carrier protein ER-ANT1 (ER-ANT1) (Arabidopsis thaliana (Mouse-ear cress)).